A 245-amino-acid chain; its full sequence is Biosynthetic peptidoglycan transglycosylase (245 aa).

A helical transmembrane segment spans residues 20–42; sequence VYAGSVFAGAWLATQLFYLAQIA.

The protein belongs to the glycosyltransferase 51 family.

It localises to the cell inner membrane. It carries out the reaction [GlcNAc-(1-&gt;4)-Mur2Ac(oyl-L-Ala-gamma-D-Glu-L-Lys-D-Ala-D-Ala)](n)-di-trans,octa-cis-undecaprenyl diphosphate + beta-D-GlcNAc-(1-&gt;4)-Mur2Ac(oyl-L-Ala-gamma-D-Glu-L-Lys-D-Ala-D-Ala)-di-trans,octa-cis-undecaprenyl diphosphate = [GlcNAc-(1-&gt;4)-Mur2Ac(oyl-L-Ala-gamma-D-Glu-L-Lys-D-Ala-D-Ala)](n+1)-di-trans,octa-cis-undecaprenyl diphosphate + di-trans,octa-cis-undecaprenyl diphosphate + H(+). The protein operates within cell wall biogenesis; peptidoglycan biosynthesis. Functionally, peptidoglycan polymerase that catalyzes glycan chain elongation from lipid-linked precursors. The protein is Biosynthetic peptidoglycan transglycosylase of Burkholderia cenocepacia (strain HI2424).